The sequence spans 1170 residues: RNA-binding protein 33 (1170 aa).

2 disordered regions span residues 1 to 152 (MAAA…EGHE) and 199 to 221 (KDIKEESDEEEEDDEESGRLRFK). Ala2 carries the post-translational modification N-acetylalanine. Residues 20–36 (QFDKPGAERSWRRRAAD) show a composition bias toward basic and acidic residues. Over residues 37-49 (EDWDSELEDDLLG) the composition is skewed to acidic residues. Ser41 carries the phosphoserine modification. Positions 82–108 (FSSQGVTISLNATSGMVTSFELSDNTN) are enriched in polar residues. Composition is skewed to acidic residues over residues 112 to 126 (GEQESEYEQEQGEDE) and 203 to 214 (EESDEEEEDDEE). Phosphoserine occurs at positions 205 and 233. 4 disordered regions span residues 259–708 (FEER…NSNL), 721–784 (MSSS…PDED), 833–863 (QLYAPPPPAEQEEQALSPSPTNGNPLLPFPG), and 942–1050 (AVPQ…VPPG). Positions 267–278 (KQGRYSSRRGGR) are enriched in basic residues. The segment covering 289–306 (GDQRRESTERGRMKDHRP) has biased composition (basic and acidic residues). A compositionally biased stretch (pro residues) spans 311-329 (TQPPVVPQAPPPPPPPPQQ). Composition is skewed to low complexity over residues 335 to 348 (LFQPQPLQPLLPVQ), 357 to 372 (QGMHMPPQLETPRMMM), and 394 to 403 (TVVTPVQVPL). The span at 419–433 (FPGPPEFPQHTPGPV) shows a compositional bias: pro residues. The residue at position 470 (Arg470) is an Asymmetric dimethylarginine. Pro residues-rich tracts occupy residues 481–490 (SPPPPPPPPT), 554–568 (FIPPRQPFLPGPGQP), and 582–630 (LHPP…PQHP). Basic residues predominate over residues 632–642 (QHQHHHHHHHL). 2 stretches are compositionally biased toward polar residues: residues 662–708 (QTAQ…NSNL) and 721–732 (MSSSRCSATPSA). 2 positions are modified to phosphoserine: Ser741 and Ser765. Positions 789–835 (LYRLKIEEQKRLREEILKQKELRRQQQAGARKKELLERLAQQQQQLY) form a coiled coil. Phosphoserine is present on Ser951. Residue Lys960 forms a Glycyl lysine isopeptide (Lys-Gly) (interchain with G-Cter in SUMO2) linkage. Phosphoserine occurs at positions 973 and 991. Arg1028 bears the Asymmetric dimethylarginine; alternate mark. At Arg1028 the chain carries Omega-N-methylarginine; alternate. In terms of domain architecture, RRM spans 1098–1170 (CVVSVEGLSS…SHINVALIVE (73 aa)).

As to quaternary structure, associates with the NXF1-NXT1 RNA export complex. Interacts with ALKBH5; facilitating ALKBH5 recruitment to m6A-containing transcripts. Interacts with SENP1; promoting ALKBH5 deSUMOylation and subsequent activation.

It localises to the nucleus. It is found in the cytoplasm. RNA reader protein, which recognizes and binds specific RNAs, thereby regulating RNA metabolic processes, such as mRNA export, mRNA stability and/or translation. Binds a subset of intronless RNAs containing GC-rich elements, such as NORAD, and promotes their nuclear export by recruiting target RNAs to components of the NXF1-NXT1 RNA export machinery. Specifically recognizes and binds N6-methyladenosine (m6A)-containing mRNAs, promoting their demethylation by ALKBH5. Acts as an molecular adapter, which (1) promotes ALKBH5 recruitment to m6A-containing transcripts and (2) activates ALKBH5 demethylase activity by recruiting SENP1, leading to ALKBH5 deSUMOylation and subsequent activation. This Homo sapiens (Human) protein is RNA-binding protein 33.